We begin with the raw amino-acid sequence, 246 residues long: UDP-N-acetyl-D-mannosaminuronic acid transferase (246 aa).

This sequence belongs to the glycosyltransferase 26 family.

It catalyses the reaction UDP-N-acetyl-alpha-D-mannosaminouronate + N-acetyl-alpha-D-glucosaminyl-di-trans,octa-cis-undecaprenyl diphosphate = beta-D-ManNAcA-(1-&gt;4)-alpha-D-GlcNAc-di-trans,octa-cis-undecaprenyl diphosphate + UDP + H(+). Its pathway is bacterial outer membrane biogenesis; enterobacterial common antigen biosynthesis. In terms of biological role, catalyzes the synthesis of Und-PP-GlcNAc-ManNAcA (Lipid II), the second lipid-linked intermediate involved in enterobacterial common antigen (ECA) synthesis. The protein is UDP-N-acetyl-D-mannosaminuronic acid transferase of Shigella flexneri.